We begin with the raw amino-acid sequence, 133 residues long: ATP synthase epsilon chain (133 aa).

Belongs to the ATPase epsilon chain family. F-type ATPases have 2 components, CF(1) - the catalytic core - and CF(0) - the membrane proton channel. CF(1) has five subunits: alpha(3), beta(3), gamma(1), delta(1), epsilon(1). CF(0) has three main subunits: a, b and c.

The protein resides in the cell membrane. Functionally, produces ATP from ADP in the presence of a proton gradient across the membrane. This is ATP synthase epsilon chain from Clostridium botulinum (strain Langeland / NCTC 10281 / Type F).